A 370-amino-acid polypeptide reads, in one-letter code: Protein DVU_0535 (370 aa).

The Cytoplasmic portion of the chain corresponds to 1–258 (MDRRRFLTLL…EELGTKSAPE (258 aa)). 3 consecutive 4Fe-4S ferredoxin-type domains span residues 40-70 (YGVL…APKA), 101-132 (DHPV…KNPD), and 133-162 (GSVT…FQYA). [4Fe-4S] cluster is bound by residues Cys-49, Cys-52, Cys-55, Cys-59, Cys-110, Cys-113, Cys-118, Cys-122, Cys-142, Cys-145, Cys-148, Cys-152, Cys-172, Cys-175, Cys-187, and Cys-191. Residues 259 to 284 (YTAGALGAVPMVVGIWPILLTGAYAI) traverse the membrane as a helical segment. At 285–370 (TKRKEKIAAE…DDAGKPGEDA (86 aa)) the chain is on the periplasmic side. Positions 345 to 355 (FEEELAAKEQP) are enriched in basic and acidic residues. Residues 345–370 (FEEELAAKEQPEAPEGDDAGKPGEDA) form a disordered region.

It localises to the cell membrane. Its function is as follows. HMWC (high-molecular-weight cytochrome c precursor), ORF2, ORF3, ORF4, ORF5, ORF6 in the HMC operon form a transmembrane protein complex that allows electron flow from the periplasmic hydrogenase to the cytoplasmic enzymes that catalyze reduction of sulfates. ORF2 is a transmembrane redox protein. The sequence is that of Protein DVU_0535 from Nitratidesulfovibrio vulgaris (strain ATCC 29579 / DSM 644 / CCUG 34227 / NCIMB 8303 / VKM B-1760 / Hildenborough) (Desulfovibrio vulgaris).